Consider the following 24-residue polypeptide: Acidic phospholipase A2 4 (24 aa).

It belongs to the phospholipase A2 family. Group II subfamily. The cofactor is Ca(2+). In terms of tissue distribution, expressed by the venom gland.

It localises to the secreted. The enzyme catalyses a 1,2-diacyl-sn-glycero-3-phosphocholine + H2O = a 1-acyl-sn-glycero-3-phosphocholine + a fatty acid + H(+). In terms of biological role, PLA2 catalyzes the calcium-dependent hydrolysis of the 2-acyl groups in 3-sn-phosphoglycerides. The polypeptide is Acidic phospholipase A2 4 (Trimeresurus stejnegeri (Chinese green tree viper)).